The chain runs to 224 residues: Ribose-5-phosphate isomerase A (224 aa).

Substrate-binding positions include 26–29 (TGST), 81–84 (DGAD), and 94–97 (KGGG). Catalysis depends on Glu-103, which acts as the Proton acceptor. Position 121 (Lys-121) interacts with substrate.

This sequence belongs to the ribose 5-phosphate isomerase family. As to quaternary structure, homodimer.

The catalysed reaction is aldehydo-D-ribose 5-phosphate = D-ribulose 5-phosphate. It participates in carbohydrate degradation; pentose phosphate pathway; D-ribose 5-phosphate from D-ribulose 5-phosphate (non-oxidative stage): step 1/1. Functionally, catalyzes the reversible conversion of ribose-5-phosphate to ribulose 5-phosphate. The protein is Ribose-5-phosphate isomerase A of Listeria innocua serovar 6a (strain ATCC BAA-680 / CLIP 11262).